The sequence spans 160 residues: Cyclic pyranopterin monophosphate synthase (160 aa).

Substrate-binding positions include 73-75 and 110-111; these read LCH and ME. The active site involves aspartate 125.

It belongs to the MoaC family. As to quaternary structure, homohexamer; trimer of dimers.

It carries out the reaction (8S)-3',8-cyclo-7,8-dihydroguanosine 5'-triphosphate = cyclic pyranopterin phosphate + diphosphate. Its pathway is cofactor biosynthesis; molybdopterin biosynthesis. In terms of biological role, catalyzes the conversion of (8S)-3',8-cyclo-7,8-dihydroguanosine 5'-triphosphate to cyclic pyranopterin monophosphate (cPMP). The sequence is that of Cyclic pyranopterin monophosphate synthase from Pseudomonas aeruginosa (strain LESB58).